The following is a 423-amino-acid chain: Lipoamide acyltransferase component of branched-chain alpha-keto acid dehydrogenase complex (423 aa).

The 76-residue stretch at 3–78 folds into the Lipoyl-binding domain; that stretch reads THVIKMPDIG…AVGSELIRIE (76 aa). At lysine 44 the chain carries N6-lipoyllysine. In terms of domain architecture, Peripheral subunit-binding (PSBD) spans 137-174; sequence LASPAVRKRALDAGIELRYVHGSGPAGRILHEDLDAFM. Residues histidine 395 and aspartate 399 contribute to the active site.

This sequence belongs to the 2-oxoacid dehydrogenase family. In terms of assembly, forms a 24-polypeptide structural core with octahedral symmetry. The cofactor is (R)-lipoate.

The catalysed reaction is N(6)-[(R)-dihydrolipoyl]-L-lysyl-[protein] + 2-methylpropanoyl-CoA = N(6)-[(R)-S(8)-2-methylpropanoyldihydrolipoyl]-L-lysyl-[protein] + CoA. The branched-chain alpha-keto dehydrogenase complex catalyzes the overall conversion of alpha-keto acids to acyl-CoA and CO(2). It contains multiple copies of three enzymatic components: branched-chain alpha-keto acid decarboxylase (E1), lipoamide acyltransferase (E2) and lipoamide dehydrogenase (E3). This Pseudomonas putida (Arthrobacter siderocapsulatus) protein is Lipoamide acyltransferase component of branched-chain alpha-keto acid dehydrogenase complex (bkdB).